A 227-amino-acid polypeptide reads, in one-letter code: Orotidine 5'-phosphate decarboxylase (227 aa).

Substrate is bound by residues D8, K30, D59–T68, T118, R178, Q187, G207, and R208. The active-site Proton donor is the K61.

This sequence belongs to the OMP decarboxylase family. Type 1 subfamily. Homodimer.

The enzyme catalyses orotidine 5'-phosphate + H(+) = UMP + CO2. It functions in the pathway pyrimidine metabolism; UMP biosynthesis via de novo pathway; UMP from orotate: step 2/2. Catalyzes the decarboxylation of orotidine 5'-monophosphate (OMP) to uridine 5'-monophosphate (UMP). The protein is Orotidine 5'-phosphate decarboxylase of Nitratiruptor sp. (strain SB155-2).